We begin with the raw amino-acid sequence, 174 residues long: uncharacterized protein (174 aa).

This is an uncharacterized protein from Bacillus subtilis (strain 168).